Here is a 662-residue protein sequence, read N- to C-terminus: Histidine decarboxylase (662 aa).

Substrate-binding residues include tyrosine 88 and histidine 201. At lysine 312 the chain carries N6-(pyridoxal phosphate)lysine. Residues 489 to 518 are disordered; sequence QPSPRAKNVIPPPPGTRGLSLESVSEGGDD.

The protein belongs to the group II decarboxylase family. Homodimer. Pyridoxal 5'-phosphate is required as a cofactor.

It carries out the reaction L-histidine + H(+) = histamine + CO2. Its pathway is amine and polyamine biosynthesis; histamine biosynthesis; histamine from L-histidine: step 1/1. Catalyzes the biosynthesis of histamine from histidine. This chain is Histidine decarboxylase (Hdc), found in Mus musculus (Mouse).